We begin with the raw amino-acid sequence, 555 residues long: Probable apyrase 6 (555 aa).

Basic residues predominate over residues 1–10 (MRRSHARSRV). Residues 1 to 45 (MRRSHARSRVKNSSSSKSDMDPIKFQIRSGNRAPSSSSTYTLTKP) form a disordered region. The Cytoplasmic segment spans residues 1–55 (MRRSHARSRVKNSSSSKSDMDPIKFQIRSGNRAPSSSSTYTLTKPNSKHAKSNLL). Over residues 28–45 (RSGNRAPSSSSTYTLTKP) the composition is skewed to polar residues. Residues 56–76 (LTVGSISVVLGVLFLCYSILF) traverse the membrane as a helical segment. Topologically, residues 77–512 (SGGNLRGSLR…HALFSNHPKT (436 aa)) are extracellular. Residue 89 to 99 (VVIDGGSTGTR) coordinates ATP. Glu212 functions as the Proton acceptor in the catalytic mechanism. 236–246 (GIVELGGASAQ) is a binding site for ATP. N-linked (GlcNAc...) asparagine glycosylation is found at Asn267 and Asn348. The chain crosses the membrane as a helical span at residues 513-533 (LHYLIGIPILMTVLVYLVTKW). Over 534–555 (RKPQLKTIYDLEKGRYIVTRIR) the chain is Cytoplasmic.

This sequence belongs to the GDA1/CD39 NTPase family. Ca(2+) serves as cofactor. In terms of tissue distribution, detected in mature pollen grains (at the protein level). Also expressed in the veins and hydathode regions of rosette leaves.

The protein resides in the cytoplasmic vesicle membrane. The catalysed reaction is a ribonucleoside 5'-triphosphate + 2 H2O = a ribonucleoside 5'-phosphate + 2 phosphate + 2 H(+). Its function is as follows. Catalyzes the hydrolysis of phosphoanhydride bonds of nucleoside tri- and di-phosphates. Involved in the regulation of pollen and anther development. The polypeptide is Probable apyrase 6 (APY6) (Arabidopsis thaliana (Mouse-ear cress)).